We begin with the raw amino-acid sequence, 33 residues long: PRRRRRRSSSRPIRRRRPRRVSRRRRRGGRRRR.

Residues 1–33 are disordered; that stretch reads PRRRRRRSSSRPIRRRRPRRVSRRRRRGGRRRR.

In terms of tissue distribution, testis.

It localises to the nucleus. Its subcellular location is the chromosome. In terms of biological role, protamines substitute for histones in the chromatin of sperm during the haploid phase of spermatogenesis. They compact sperm DNA into a highly condensed, stable and inactive complex. The sequence is that of Protamine-1B from Oncorhynchus mykiss (Rainbow trout).